A 436-amino-acid polypeptide reads, in one-letter code: L-threonine dehydratase biosynthetic IlvA (436 aa).

The tract at residues 1–357 is catalytic; it reads MSETYVSEKS…HRGLKHYFLV (357 aa). N6-(pyridoxal phosphate)lysine is present on Lys-70. Residues Asn-97, 203 to 207, and Ser-329 contribute to the pyridoxal 5'-phosphate site; that span reads GGGGL. In terms of domain architecture, ACT-like spans 353-427; sequence HYFLVNFPQK…SAIDSRRLEP (75 aa). The tract at residues 358–436 is regulatory; that stretch reads NFPQKPGQLR…PGTPEYEYLT (79 aa).

It belongs to the serine/threonine dehydratase family. As to quaternary structure, homotetramer. It depends on pyridoxal 5'-phosphate as a cofactor.

The enzyme catalyses L-threonine = 2-oxobutanoate + NH4(+). It functions in the pathway amino-acid biosynthesis; L-isoleucine biosynthesis; 2-oxobutanoate from L-threonine: step 1/1. Catalyzes the anaerobic formation of alpha-ketobutyrate and ammonia from threonine in a two-step reaction. The first step involved a dehydration of threonine and a production of enamine intermediates (aminocrotonate), which tautomerizes to its imine form (iminobutyrate). Both intermediates are unstable and short-lived. The second step is the nonenzymatic hydrolysis of the enamine/imine intermediates to form 2-ketobutyrate and free ammonia. In the low water environment of the cell, the second step is accelerated by RidA. In Corynebacterium glutamicum (strain ATCC 13032 / DSM 20300 / JCM 1318 / BCRC 11384 / CCUG 27702 / LMG 3730 / NBRC 12168 / NCIMB 10025 / NRRL B-2784 / 534), this protein is L-threonine dehydratase biosynthetic IlvA (ilvA).